Consider the following 385-residue polypeptide: Leucine aminopeptidase 1 (385 aa).

An N-terminal signal peptide occupies residues 1 to 20; it reads MKFPSLLSLGVAASTTIVAA. A propeptide spanning residues 21 to 87 is cleaved from the precursor; sequence VPDQKPIGDI…FPKTFAQTTV (67 aa). Asn177 carries an N-linked (GlcNAc...) asparagine glycan. Residues His185, Asp204, Glu243, and Asp270 each contribute to the Zn(2+) site. Cys319 and Cys323 form a disulfide bridge. Position 352 (His352) interacts with Zn(2+).

Belongs to the peptidase M28 family. M28E subfamily. Monomer. Zn(2+) is required as a cofactor.

It is found in the secreted. Its function is as follows. Extracellular aminopeptidase that allows assimilation of proteinaceous substrates. This Ajellomyces capsulatus (strain G186AR / H82 / ATCC MYA-2454 / RMSCC 2432) (Darling's disease fungus) protein is Leucine aminopeptidase 1 (LAP1).